The primary structure comprises 746 residues: Probably inactive copalyl diphosphate synthase 3 (746 aa).

The DXDD motif; degenerated motif lies at 331 to 334 (DVND).

The protein belongs to the terpene synthase family. Tpsc subfamily. As to expression, mostly expressed in stems, and, at low levels, in roots and leaves, but barely in flowers.

The polypeptide is Probably inactive copalyl diphosphate synthase 3 (Isodon rubescens (Rabdosia rubescens)).